A 166-amino-acid polypeptide reads, in one-letter code: NAD(P)H-quinone oxidoreductase subunit I, chloroplastic (166 aa).

2 consecutive 4Fe-4S ferredoxin-type domains span residues Gly55–Lys84 and Leu95–Glu124. [4Fe-4S] cluster-binding residues include Cys64, Cys67, Cys70, Cys74, Cys104, Cys107, Cys110, and Cys114.

The protein belongs to the complex I 23 kDa subunit family. NDH is composed of at least 16 different subunits, 5 of which are encoded in the nucleus. The cofactor is [4Fe-4S] cluster.

It localises to the plastid. The protein resides in the chloroplast thylakoid membrane. It carries out the reaction a plastoquinone + NADH + (n+1) H(+)(in) = a plastoquinol + NAD(+) + n H(+)(out). It catalyses the reaction a plastoquinone + NADPH + (n+1) H(+)(in) = a plastoquinol + NADP(+) + n H(+)(out). Functionally, NDH shuttles electrons from NAD(P)H:plastoquinone, via FMN and iron-sulfur (Fe-S) centers, to quinones in the photosynthetic chain and possibly in a chloroplast respiratory chain. The immediate electron acceptor for the enzyme in this species is believed to be plastoquinone. Couples the redox reaction to proton translocation, and thus conserves the redox energy in a proton gradient. This Palafoxia arida (Spanish needles) protein is NAD(P)H-quinone oxidoreductase subunit I, chloroplastic.